The following is a 252-amino-acid chain: Proteasome subunit alpha 1 (252 aa).

Position 1 is an N-acetylmethionine; alternate (methionine 1).

This sequence belongs to the peptidase T1A family. As to quaternary structure, the 20S proteasome core is composed of 14 alpha and 14 beta subunits that assemble into four stacked heptameric rings, resulting in a barrel-shaped structure. The two inner rings, each composed of seven catalytic beta subunits, are sandwiched by two outer rings, each composed of seven alpha subunits. H.volcanii produces at least 2 types of 20S proteasomes: an alpha1-beta proteasome and a proteasome containing all three subunits (alpha1, alpha2, and beta) that appears to be asymmetrical with homo-oligomeric alpha1 and alpha2 rings positioned on separate ends. The catalytic chamber with the active sites is on the inside of the barrel. Has probably a gated structure, the ends of the cylinder being occluded by the N-termini of the alpha-subunits. Is likely capped at one or both ends by the proteasome regulatory ATPase, PAN. Post-translationally, acetylated. The acetylated form at Met-1 was shown to be in 100-fold excess of the unacetylated form with the initiator methionine removed in whole cells and purified 20S proteasomes.

It is found in the cytoplasm. With respect to regulation, the formation of the proteasomal ATPase PAN-20S proteasome complex, via the docking of the C-termini of PAN into the intersubunit pockets in the alpha-rings, triggers opening of the gate for substrate entry. Interconversion between the open-gate and close-gate conformations leads to a dynamic regulation of the 20S proteasome proteolysis activity. In vitro, the chymotrypsin-like activity of the alpha1-beta proteasome is potently inhibited by carbobenzoxyl-leucinyl-leucinyl-leucinal-H (MG132) and significantly by N-acetyl-leucinyl-leucinyl-norleucinal-H (calpain inhibitor I). Component of the proteasome core, a large protease complex with broad specificity involved in protein degradation. The H.volcanii alpha1-beta proteasome is able to cleave oligopeptides after Phe, Tyr and Trp, poorly after Glu but not after Arg. Thus, displays chymotrypsin-like activity, low caspase-like activity but no trypsin-like activity. In Haloferax volcanii (strain ATCC 29605 / DSM 3757 / JCM 8879 / NBRC 14742 / NCIMB 2012 / VKM B-1768 / DS2) (Halobacterium volcanii), this protein is Proteasome subunit alpha 1.